The chain runs to 517 residues: Aldehyde dehydrogenase X, mitochondrial (517 aa).

The N-terminal 17 residues, 1 to 17, are a transit peptide targeting the mitochondrion; that stretch reads MLRFLAPRLLSLQGRTA. K51 carries the N6-acetyllysine modification. K52 is subject to N6-acetyllysine; alternate. K52 bears the N6-succinyllysine; alternate mark. K81 is subject to N6-succinyllysine. 262 to 267 is an NAD(+) binding site; the sequence is GSTEVG. E285 (proton acceptor) is an active-site residue. C319 functions as the Nucleophile in the catalytic mechanism. N6-acetyllysine; alternate is present on residues K364, K383, K399, K414, and K426. An N6-succinyllysine; alternate mark is found at K364, K383, K399, K414, and K426. K429 is subject to N6-acetyllysine.

It belongs to the aldehyde dehydrogenase family. In terms of assembly, homotetramer.

Its subcellular location is the mitochondrion matrix. The catalysed reaction is an aldehyde + NAD(+) + H2O = a carboxylate + NADH + 2 H(+). It functions in the pathway alcohol metabolism; ethanol degradation; acetate from ethanol: step 2/2. In terms of biological role, ALDHs play a major role in the detoxification of alcohol-derived acetaldehyde. They are involved in the metabolism of corticosteroids, biogenic amines, neurotransmitters, and lipid peroxidation. This is Aldehyde dehydrogenase X, mitochondrial (ALDH1B1) from Pongo abelii (Sumatran orangutan).